Here is a 390-residue protein sequence, read N- to C-terminus: Lissencephaly-1 homolog (390 aa).

In terms of domain architecture, LisH spans 7 to 39 (QREEINRAVAEYLQNNGYSEAFNMLLKEASLSE). A coiled-coil region spans residues 54-80 (TTVLRLQRKVNDLEAKLLESQQEINHG). 7 WD repeats span residues 104–145 (GHRL…KTLK), 146–185 (GHTD…DCLK), 189–228 (GHEH…CVFT), 231–270 (GHND…RNWY), 272–313 (EIMS…VIFT), 316–355 (AHEN…CMKA), and 358–390 (AHEH…WECR).

It belongs to the WD repeat LIS1/nudF family.

Its subcellular location is the cytoplasm. The protein resides in the cytoskeleton. The protein localises to the microtubule organizing center. It is found in the centrosome. In terms of biological role, positively regulates the activity of the minus-end directed microtubule motor protein dynein. May enhance dynein-mediated microtubule sliding by targeting dynein to the microtubule plus end. Required for several dynein- and microtubule-dependent processes. In Caenorhabditis briggsae, this protein is Lissencephaly-1 homolog.